The sequence spans 406 residues: Acetate kinase (406 aa).

Asn7 lines the Mg(2+) pocket. Residue Lys14 coordinates ATP. Substrate is bound at residue Arg90. The active-site Proton donor/acceptor is the Asp147. ATP is bound by residues 207-211 (HLGNG), 283-285 (DMR), and 331-335 (GVGEN). Glu385 lines the Mg(2+) pocket.

The protein belongs to the acetokinase family. In terms of assembly, homodimer. The cofactor is Mg(2+). Requires Mn(2+) as cofactor.

Its subcellular location is the cytoplasm. It catalyses the reaction acetate + ATP = acetyl phosphate + ADP. It participates in metabolic intermediate biosynthesis; acetyl-CoA biosynthesis; acetyl-CoA from acetate: step 1/2. In terms of biological role, catalyzes the formation of acetyl phosphate from acetate and ATP. Can also catalyze the reverse reaction. This is Acetate kinase from Thermosipho africanus (strain TCF52B).